We begin with the raw amino-acid sequence, 324 residues long: Bacilliredoxin reductase Bdr (324 aa).

C220 is subject to S-bacillithiol cysteine disulfide.

In terms of assembly, interacts with BrxC. FAD serves as cofactor. C-terminal Cys can react with bacillithiol (BSH) to form mixed disulfides. S-bacillithiolation protects Cys residues against overoxidation by acting as a redox switch in response to oxidative stress.

S-bacillithiolation is the formation of mixed disulfide bonds between protein thiols and the general thiol reductant bacillithiol (BSH) under oxidative stress. BSH is an equivalent of glutathione (GSH) in Firmicutes. This protein is a NADPH-dependent bacilliredoxin reductase, which debacillithiolates (removes BSH) the S-bacillithiolated BrxB (BrxB-SSB), and to a lesser extent BrxC (BrxC-SSB). Involved in a redox cascade increasing the efficacy of BrxB function by reducing BrxB-SSB and thus reactivating it. Has NADPH-dependent oxidase activity under aerobic conditions producing hydrogen peroxide (H(2)O(2)). The polypeptide is Bacilliredoxin reductase Bdr (Bacillus subtilis (strain 168)).